Here is a 369-residue protein sequence, read N- to C-terminus: UPF0284 protein AM1_5137 (369 aa).

This sequence belongs to the UPF0284 family.

The polypeptide is UPF0284 protein AM1_5137 (Acaryochloris marina (strain MBIC 11017)).